Consider the following 329-residue polypeptide: VSG expression site-associated protein 221A (329 aa).

The first 23 residues, 1–23 (MKVEIVELVVLLFSVTCVDAWLQ), serve as a signal peptide directing secretion. N-linked (GlcNAc...) asparagine glycans are attached at residues asparagine 73, asparagine 294, and asparagine 308.

Its function is as follows. Not known but may be related to activation of the variant surface glycoprotein genes. In Trypanosoma brucei brucei, this protein is VSG expression site-associated protein 221A.